A 54-amino-acid chain; its full sequence is Ovomucoid (54 aa).

The Kazal-like domain maps to 4-54 (VDCSDYPKPACSLDYMPLCGSDSKTYSNKCNFCNAVVDSNGTLTLSHFEKC). 3 cysteine pairs are disulfide-bonded: Cys6–Cys36, Cys14–Cys33, and Cys22–Cys54. Asn43 carries an N-linked (GlcNAc...) asparagine glycan.

It localises to the secreted. The sequence is that of Ovomucoid from Chroicocephalus ridibundus (Black-headed gull).